The sequence spans 133 residues: Phosphoribosyl-AMP cyclohydrolase (133 aa).

D90 is a binding site for Mg(2+). C91 is a binding site for Zn(2+). The Mg(2+) site is built by D92 and D94. Positions 107 and 114 each coordinate Zn(2+).

Belongs to the PRA-CH family. As to quaternary structure, homodimer. Mg(2+) serves as cofactor. Zn(2+) is required as a cofactor.

It localises to the cytoplasm. The catalysed reaction is 1-(5-phospho-beta-D-ribosyl)-5'-AMP + H2O = 1-(5-phospho-beta-D-ribosyl)-5-[(5-phospho-beta-D-ribosylamino)methylideneamino]imidazole-4-carboxamide. Its pathway is amino-acid biosynthesis; L-histidine biosynthesis; L-histidine from 5-phospho-alpha-D-ribose 1-diphosphate: step 3/9. In terms of biological role, catalyzes the hydrolysis of the adenine ring of phosphoribosyl-AMP. The polypeptide is Phosphoribosyl-AMP cyclohydrolase (Streptomyces avermitilis (strain ATCC 31267 / DSM 46492 / JCM 5070 / NBRC 14893 / NCIMB 12804 / NRRL 8165 / MA-4680)).